The primary structure comprises 258 residues: Type III pantothenate kinase (258 aa).

An ATP-binding site is contributed by 6–13 (DVGNTNIV). Residues Y100 and 107-110 (GADR) each bind substrate. D109 acts as the Proton acceptor in catalysis. D129 serves as a coordination point for K(+). Residue T132 coordinates ATP. Residue T184 coordinates substrate.

This sequence belongs to the type III pantothenate kinase family. Homodimer. NH4(+) serves as cofactor. K(+) is required as a cofactor.

The protein localises to the cytoplasm. The enzyme catalyses (R)-pantothenate + ATP = (R)-4'-phosphopantothenate + ADP + H(+). It functions in the pathway cofactor biosynthesis; coenzyme A biosynthesis; CoA from (R)-pantothenate: step 1/5. Its function is as follows. Catalyzes the phosphorylation of pantothenate (Pan), the first step in CoA biosynthesis. This chain is Type III pantothenate kinase, found in Clostridium botulinum (strain Loch Maree / Type A3).